We begin with the raw amino-acid sequence, 155 residues long: MSQVILDLQLACEDNSGLPEESQFQTWLNAVIPQFQEESEVTIRVVDSAESHCLNLTYRGKDKPTNVLSFPFEVPPGMEMSLLGDLVICRQVVEKEAQEQGKPLEAHWAHMVVHGSLHLLGYDHIEDDEAEEMEALETEIMLALGYEDPYIAEKE.

Residues His114, His118, and His124 each contribute to the Zn(2+) site.

Belongs to the endoribonuclease YbeY family. It depends on Zn(2+) as a cofactor.

It localises to the cytoplasm. Functionally, single strand-specific metallo-endoribonuclease involved in late-stage 70S ribosome quality control and in maturation of the 3' terminus of the 16S rRNA. This Escherichia coli O7:K1 (strain IAI39 / ExPEC) protein is Endoribonuclease YbeY.